The following is a 357-amino-acid chain: Alanine racemase (357 aa).

The active-site Proton acceptor; specific for D-alanine is K35. K35 carries the N6-(pyridoxal phosphate)lysine modification. R131 lines the substrate pocket. The active-site Proton acceptor; specific for L-alanine is Y256. Position 304 (M304) interacts with substrate.

This sequence belongs to the alanine racemase family. Pyridoxal 5'-phosphate is required as a cofactor.

The catalysed reaction is L-alanine = D-alanine. Its pathway is amino-acid biosynthesis; D-alanine biosynthesis; D-alanine from L-alanine: step 1/1. Functionally, catalyzes the interconversion of L-alanine and D-alanine. May also act on other amino acids. This is Alanine racemase (alr) from Legionella pneumophila (strain Corby).